The chain runs to 493 residues: Amphoterin-induced protein 1 (493 aa).

A signal peptide spans 1-27; the sequence is MQPQRDLRGLWLLLLSLFLLLFEVARA. Residues 28–61 form the LRRNT domain; sequence GRPVVSCPANCLCASNILSCSKQQLPNVPQSLPG. Residues 28-372 are Extracellular-facing; that stretch reads GRPVVSCPAN…LHGHHDTLNT (345 aa). Disulfide bonds link Cys-34–Cys-40 and Cys-38–Cys-47. LRR repeat units lie at residues 62–83, 87–108, 111–132, 135–156, 159–179, and 186–206; these read YTAL…WTPT, NLHS…AFVP, NLRY…LFSG, ALEV…AFED, QLQK…ELIK, and KLTL…TDLQ. A glycan (N-linked (GlcNAc...) asparagine) is linked at Asn-72. The 52-residue stretch at 221–272 folds into the LRRCT domain; it reads NPLECDCKLYQLFSHWQYRQLSSVMDFQEDLYCVHSKKLHNVFSLDFFNCSE. 3 disulfides stabilise this stretch: Cys-225/Cys-253, Cys-227/Cys-270, and Cys-290/Cys-341. Asn-269, Asn-315, Asn-349, and Asn-360 each carry an N-linked (GlcNAc...) asparagine glycan. An Ig-like C2-type domain is found at 269–353; sequence NCSEYKESAW…MGETFNETLS (85 aa). Residues 373-393 form a helical membrane-spanning segment; it reads AYTTLVGCILSVVLVLIYLYL. At 394–493 the chain is on the cytoplasmic side; sequence TPCRCWCRGV…SVFSDTPIVV (100 aa). The disordered stretch occupies residues 405–493; sequence KPSSHQGDSL…SVFSDTPIVV (89 aa). Residues 408 to 424 are compositionally biased toward polar residues; that stretch reads SHQGDSLSSSMLSTTPN. Residues 431–442 show a composition bias toward basic and acidic residues; that stretch reads GDKDDGFDRRVA. Residues Ser-477 and Ser-481 each carry the phosphoserine modification.

It belongs to the immunoglobulin superfamily. AMIGO family. As to quaternary structure, homodimer, and heterodimer with AMIGO2 and AMIGO3. Interacts with KCNB1.

It is found in the cell membrane. It localises to the perikaryon. The protein resides in the cell projection. Its subcellular location is the dendrite. The protein localises to the axon. Promotes growth and fasciculation of neurites from cultured hippocampal neurons. May be involved in fasciculation as well as myelination of developing neural axons. May have a role in regeneration as well as neural plasticity in the adult nervous system. May mediate homophilic as well as heterophilic cell-cell interaction and contribute to signal transduction through its intracellular domain. Assembled with KCNB1 modulates the gating characteristics of the delayed rectifier voltage-dependent potassium channel KCNB1. In Rattus norvegicus (Rat), this protein is Amphoterin-induced protein 1.